The primary structure comprises 683 residues: DNA ligase (683 aa).

NAD(+)-binding positions include 35–39 (DADYD), 84–85 (SL), and E115. K117 (N6-AMP-lysine intermediate) is an active-site residue. NAD(+)-binding residues include R138, E175, K293, and K317. C411, C414, C429, and C435 together coordinate Zn(2+). The BRCT domain occupies 598 to 683 (QTNSAVSGKT…LQNISTGAQQ (86 aa)).

It belongs to the NAD-dependent DNA ligase family. LigA subfamily. Mg(2+) is required as a cofactor. Requires Mn(2+) as cofactor.

The catalysed reaction is NAD(+) + (deoxyribonucleotide)n-3'-hydroxyl + 5'-phospho-(deoxyribonucleotide)m = (deoxyribonucleotide)n+m + AMP + beta-nicotinamide D-nucleotide.. DNA ligase that catalyzes the formation of phosphodiester linkages between 5'-phosphoryl and 3'-hydroxyl groups in double-stranded DNA using NAD as a coenzyme and as the energy source for the reaction. It is essential for DNA replication and repair of damaged DNA. In Nitrosomonas eutropha (strain DSM 101675 / C91 / Nm57), this protein is DNA ligase.